An 837-amino-acid chain; its full sequence is Protein translocase subunit SecA 1 (837 aa).

Residues Q85, 103–107 (GEGKT), and D493 contribute to the ATP site. Zn(2+) contacts are provided by C821, C823, C832, and H833.

This sequence belongs to the SecA family. Monomer and homodimer. Part of the essential Sec protein translocation apparatus which comprises SecA, SecYEG and auxiliary proteins SecDF. Other proteins may also be involved. It depends on Zn(2+) as a cofactor.

The protein localises to the cell membrane. It is found in the cytoplasm. The enzyme catalyses ATP + H2O + cellular proteinSide 1 = ADP + phosphate + cellular proteinSide 2.. Functionally, part of the Sec protein translocase complex. Interacts with the SecYEG preprotein conducting channel. Has a central role in coupling the hydrolysis of ATP to the transfer of proteins into and across the cell membrane, serving as an ATP-driven molecular motor driving the stepwise translocation of polypeptide chains across the membrane. The chain is Protein translocase subunit SecA 1 from Streptococcus pneumoniae serotype 4 (strain ATCC BAA-334 / TIGR4).